The primary structure comprises 540 residues: Zona pellucida sperm-binding protein 4 (540 aa).

Residues 1–24 (MAPGSTMWLLGYIFLCFPVSFALI) form the signal peptide. The Extracellular portion of the chain corresponds to 25–515 (KQPKPETPTD…SGVPVHPGAL (491 aa)). N-linked (GlcNAc...) asparagine glycans are attached at residues asparagine 76 and asparagine 97. The P-type domain occupies 145–187 (GLCDSVPVQDRLPCATAPISQEDCEELGCCHSSEEVNACYYGN). The ZP domain maps to 192-470 (HCTQEGHFSI…VTCPIDSRRR (279 aa)). Residues asparagine 206 and asparagine 223 are each glycosylated (N-linked (GlcNAc...) asparagine). Serine 296 carries an O-linked (GalNAc...) serine glycan. An O-linked (GalNAc...) threonine glycan is attached at threonine 306. A disulfide bridge links cysteine 371 with cysteine 446. The propeptide at 467–540 (SRRRNSDINF…VSYVAIRTRR (74 aa)) is removed in mature form. N-linked (GlcNAc...) asparagine glycosylation is found at asparagine 478 and asparagine 482. A helical transmembrane segment spans residues 516–536 (WVAGLSGIFIIGALLVSYVAI). The Cytoplasmic portion of the chain corresponds to 537–540 (RTRR).

The protein belongs to the ZP domain family. ZPB subfamily. Proteolytically cleaved before the transmembrane segment to yield the secreted ectodomain incorporated in the zona pellucida. Expressed in oocytes (at protein level).

Its subcellular location is the zona pellucida. The protein localises to the cell membrane. In terms of biological role, component of the zona pellucida, an extracellular matrix surrounding oocytes which mediates sperm binding, induction of the acrosome reaction and prevents post-fertilization polyspermy. The zona pellucida is composed of 3 to 4 glycoproteins, ZP1, ZP2, ZP3, and ZP4. ZP4 may act as a sperm receptor. In Oryctolagus cuniculus (Rabbit), this protein is Zona pellucida sperm-binding protein 4 (ZP4).